The sequence spans 103 residues: N(4)-acetylcytidine amidohydrolase (103 aa).

Residues 6-101 enclose the ASCH domain; sequence ITFFQRFQDD…QTQFYVIEFK (96 aa). Lys-21 acts as the Proton acceptor in catalysis. The Nucleophile role is filled by Thr-24. Glu-74 acts as the Proton donor in catalysis.

This sequence belongs to the N(4)-acetylcytidine amidohydrolase family.

The enzyme catalyses N(4)-acetylcytidine + H2O = cytidine + acetate + H(+). It catalyses the reaction N(4)-acetyl-2'-deoxycytidine + H2O = 2'-deoxycytidine + acetate + H(+). It carries out the reaction N(4)-acetylcytosine + H2O = cytosine + acetate + H(+). Its function is as follows. Catalyzes the hydrolysis of N(4)-acetylcytidine (ac4C). The polypeptide is N(4)-acetylcytidine amidohydrolase (yqfB) (Escherichia coli O127:H6 (strain E2348/69 / EPEC)).